The chain runs to 304 residues: Bifunctional phosphoglucose/phosphomannose isomerase (304 aa).

In terms of domain architecture, SIS spans 16 to 147 (FDKSFKVGKY…KPKIGDVDEA (132 aa)). Residues G35, S36, S74, S76, T79, and R122 each coordinate D-fructose 6-phosphate. Catalysis depends on E196, which acts as the Proton acceptor. 2 residues coordinate D-fructose 6-phosphate: H212 and K300. The active-site Proton donor is H212. Residue K300 is the Proton acceptor of the active site.

The protein belongs to the PGI/PMI family. In terms of assembly, homodimer.

The enzyme catalyses alpha-D-glucose 6-phosphate = beta-D-fructose 6-phosphate. It carries out the reaction D-mannose 6-phosphate = D-fructose 6-phosphate. In terms of biological role, dual specificity isomerase that catalyzes the isomerization of both glucose-6-phosphate and mannose-6-phosphate to fructose-6-phosphate. This Thermoplasma volcanium (strain ATCC 51530 / DSM 4299 / JCM 9571 / NBRC 15438 / GSS1) protein is Bifunctional phosphoglucose/phosphomannose isomerase.